Here is a 172-residue protein sequence, read N- to C-terminus: 3-phenylpropionate/cinnamic acid dioxygenase subunit beta (172 aa).

This sequence belongs to the bacterial ring-hydroxylating dioxygenase beta subunit family. In terms of assembly, this dioxygenase system consists of four proteins: the two subunits of the hydroxylase component (HcaE and HcaF), a ferredoxin (HcaC) and a ferredoxin reductase (HcaD).

The enzyme catalyses 3-phenylpropanoate + NADH + O2 + H(+) = 3-(cis-5,6-dihydroxycyclohexa-1,3-dien-1-yl)propanoate + NAD(+). It carries out the reaction (E)-cinnamate + NADH + O2 + H(+) = (2E)-3-(cis-5,6-dihydroxycyclohexa-1,3-dien-1-yl)prop-2-enoate + NAD(+). It functions in the pathway aromatic compound metabolism; 3-phenylpropanoate degradation. In terms of biological role, part of the multicomponent 3-phenylpropionate dioxygenase. Converts 3-phenylpropionic acid (PP) and cinnamic acid (CI) into 3-phenylpropionate-dihydrodiol (PP-dihydrodiol) and cinnamic acid-dihydrodiol (CI-dihydrodiol), respectively. The protein is 3-phenylpropionate/cinnamic acid dioxygenase subunit beta of Escherichia coli O157:H7.